The following is a 1097-amino-acid chain: DNA polymerase catalytic subunit (1097 aa).

The interval 1069 to 1097 (RGGDDSDGGDSEKENMDTERSSSHEAMET) is disordered. Over residues 1078 to 1097 (DSEKENMDTERSSSHEAMET) the composition is skewed to basic and acidic residues.

Belongs to the DNA polymerase type-B family.

Its subcellular location is the host nucleus. The enzyme catalyses DNA(n) + a 2'-deoxyribonucleoside 5'-triphosphate = DNA(n+1) + diphosphate. This Murid herpesvirus 1 (strain Smith) (MuHV-1) protein is DNA polymerase catalytic subunit (UL54).